Reading from the N-terminus, the 562-residue chain is Potassium-transporting ATPase potassium-binding subunit (562 aa).

The next 12 membrane-spanning stretches (helical) occupy residues 6-26, 62-82, 132-152, 170-190, 253-273, 283-303, 327-347, 356-376, 379-399, 416-436, 483-503, and 526-546; these read FLLI…LGSF, YALA…ALLM, GLAV…FALI, VFRI…LFFV, FVQM…FGQV, LIWA…YAEL, FGIL…CGAV, ALGG…FGGV, GLYG…LMIG, MTAL…ALAI, LLLA…VLAI, and LFIG…FVPA.

The protein belongs to the KdpA family. In terms of assembly, the system is composed of three essential subunits: KdpA, KdpB and KdpC.

Its subcellular location is the cell inner membrane. Its function is as follows. Part of the high-affinity ATP-driven potassium transport (or Kdp) system, which catalyzes the hydrolysis of ATP coupled with the electrogenic transport of potassium into the cytoplasm. This subunit binds the periplasmic potassium ions and delivers the ions to the membrane domain of KdpB through an intramembrane tunnel. In Serratia proteamaculans (strain 568), this protein is Potassium-transporting ATPase potassium-binding subunit.